Consider the following 541-residue polypeptide: Arginine--tRNA ligase (541 aa).

The 'HIGH' region signature appears at 119–129 (ANPTGPLHIGH).

This sequence belongs to the class-I aminoacyl-tRNA synthetase family. Monomer.

Its subcellular location is the cytoplasm. The enzyme catalyses tRNA(Arg) + L-arginine + ATP = L-arginyl-tRNA(Arg) + AMP + diphosphate. The chain is Arginine--tRNA ligase from Helicobacter pylori (strain G27).